We begin with the raw amino-acid sequence, 317 residues long: Epidermal growth factor-like protein (317 aa).

Residues 1-23 (MDFKIFLFLTAIFMIVGVTVSTA) form the signal peptide. The segment at 24–33 (TTNPTAPRAY) is may be required for E.coli agglutination activity. 6 EGF-like domains span residues 93 to 128 (HCTPDCPSGCGLGNCTAPNVCTCNKGAGFGPDGKCI), 130 to 161 (VCPGRCLNGQCYGNFCNCNSGFVLEPNGRYCT), 163 to 195 (GCTRNCGPGGQCVGNNQCSCLSGFALNSQGTCQ), 208 to 243 (ACEPLCPKGCVNGECVAPGQCRCKSGYALNSSKVCA), 245 to 280 (KCSQPCYNGFCSAPNVCTCKEGYIKDATSRNGNRCI), and 282 to 315 (YCAAGCPNGTCSAPNFCICKQGYIKQSKGSNVCV). Intrachain disulfides connect cysteine 98–cysteine 107, cysteine 102–cysteine 113, cysteine 115–cysteine 127, cysteine 131–cysteine 140, cysteine 135–cysteine 145, cysteine 147–cysteine 160, cysteine 164–cysteine 174, cysteine 168–cysteine 180, cysteine 182–cysteine 194, cysteine 213–cysteine 222, cysteine 217–cysteine 228, cysteine 230–cysteine 242, cysteine 246–cysteine 255, cysteine 250–cysteine 261, cysteine 263–cysteine 279, cysteine 283–cysteine 292, cysteine 287–cysteine 298, and cysteine 300–cysteine 314.

The protein localises to the secreted. Its function is as follows. Binds to lipopolysaccharides (LPS) present on the cell walls of Gram-negative bacteria, behaving as a pattern recognition receptor (PRR). Induces bacterial aggregation and enhances their subsequent clearance by the innate immune response. Binds to the inner core oligosaccharides region of rough-type bacterial LPS. Displays activity against the Gram-negative bacterium E.coli. Does not display any activity against the Gram-positive bacterium S.aureus or the fungi C.albicans. In Holotrichia diomphalia (Korean black chafer), this protein is Epidermal growth factor-like protein.